The following is a 692-amino-acid chain: Glycine--tRNA ligase beta subunit (692 aa).

It belongs to the class-II aminoacyl-tRNA synthetase family. In terms of assembly, tetramer of two alpha and two beta subunits.

The protein localises to the cytoplasm. It carries out the reaction tRNA(Gly) + glycine + ATP = glycyl-tRNA(Gly) + AMP + diphosphate. This chain is Glycine--tRNA ligase beta subunit, found in Hahella chejuensis (strain KCTC 2396).